The following is a 480-amino-acid chain: Protein nucleotidyltransferase YdiU (480 aa).

ATP is bound by residues Gly87, Gly89, Arg90, Lys110, Asp122, Gly123, Arg173, and Arg180. Asp249 serves as the catalytic Proton acceptor. Positions 250 and 259 each coordinate Mg(2+). Residue Asp259 participates in ATP binding.

This sequence belongs to the SELO family. Mg(2+) serves as cofactor. The cofactor is Mn(2+).

It catalyses the reaction L-seryl-[protein] + ATP = 3-O-(5'-adenylyl)-L-seryl-[protein] + diphosphate. It carries out the reaction L-threonyl-[protein] + ATP = 3-O-(5'-adenylyl)-L-threonyl-[protein] + diphosphate. The enzyme catalyses L-tyrosyl-[protein] + ATP = O-(5'-adenylyl)-L-tyrosyl-[protein] + diphosphate. The catalysed reaction is L-histidyl-[protein] + UTP = N(tele)-(5'-uridylyl)-L-histidyl-[protein] + diphosphate. It catalyses the reaction L-seryl-[protein] + UTP = O-(5'-uridylyl)-L-seryl-[protein] + diphosphate. It carries out the reaction L-tyrosyl-[protein] + UTP = O-(5'-uridylyl)-L-tyrosyl-[protein] + diphosphate. Its function is as follows. Nucleotidyltransferase involved in the post-translational modification of proteins. It can catalyze the addition of adenosine monophosphate (AMP) or uridine monophosphate (UMP) to a protein, resulting in modifications known as AMPylation and UMPylation. This chain is Protein nucleotidyltransferase YdiU, found in Anoxybacillus flavithermus (strain DSM 21510 / WK1).